Reading from the N-terminus, the 556-residue chain is Arginine--tRNA ligase (556 aa).

The 'HIGH' region motif lies at 132-142 (ANPTGDLHLGH).

This sequence belongs to the class-I aminoacyl-tRNA synthetase family. In terms of assembly, monomer.

Its subcellular location is the cytoplasm. It catalyses the reaction tRNA(Arg) + L-arginine + ATP = L-arginyl-tRNA(Arg) + AMP + diphosphate. This is Arginine--tRNA ligase from Listeria monocytogenes serovar 1/2a (strain ATCC BAA-679 / EGD-e).